The sequence spans 228 residues: 7-cyano-7-deazaguanine synthase (228 aa).

8–18 (LSGGLDSTTCL) contributes to the ATP binding site. Residues C188, C198, C201, and C204 each coordinate Zn(2+).

This sequence belongs to the QueC family. Requires Zn(2+) as cofactor.

It catalyses the reaction 7-carboxy-7-deazaguanine + NH4(+) + ATP = 7-cyano-7-deazaguanine + ADP + phosphate + H2O + H(+). Its pathway is purine metabolism; 7-cyano-7-deazaguanine biosynthesis. In terms of biological role, catalyzes the ATP-dependent conversion of 7-carboxy-7-deazaguanine (CDG) to 7-cyano-7-deazaguanine (preQ(0)). This is 7-cyano-7-deazaguanine synthase from Legionella pneumophila subsp. pneumophila (strain Philadelphia 1 / ATCC 33152 / DSM 7513).